A 154-amino-acid chain; its full sequence is Ribosome maturation factor RimP (154 aa).

The protein belongs to the RimP family.

It localises to the cytoplasm. Its function is as follows. Required for maturation of 30S ribosomal subunits. This is Ribosome maturation factor RimP from Yersinia pseudotuberculosis serotype O:1b (strain IP 31758).